Here is a 219-residue protein sequence, read N- to C-terminus: MISGSEYHKEYMKGTTTVGLICEDGVVLATDKRATMGNLIADKEAKKLYKIDDYIAMTIAGSVGDAQSLIRLLSAEAKIYKMRTGNNMTPLSCTTLTSNVLHGNRHYPLLTQLIIGGYDLINGPKLFSLDPVGGINEESSFTATGSGSPTAYGVLEAEYKSEINIEKGLLIAVKALISAMQRDAYSGNGISLAKIDKTGVTLYSDEEIENLVKKVTKKK.

A propeptide spans 1 to 14 (MISGSEYHKEYMKG) (removed in mature form; by autocatalysis). The active-site Nucleophile is the T15.

The protein belongs to the peptidase T1B family. As to quaternary structure, the 20S proteasome core is composed of 14 alpha and 14 beta subunits that assemble into four stacked heptameric rings, resulting in a barrel-shaped structure. The two inner rings, each composed of seven catalytic beta subunits, are sandwiched by two outer rings, each composed of seven alpha subunits. The catalytic chamber with the active sites is on the inside of the barrel. Has a gated structure, the ends of the cylinder being occluded by the N-termini of the alpha-subunits. Is capped at one or both ends by the proteasome regulatory ATPase, PAN.

The protein resides in the cytoplasm. The enzyme catalyses Cleavage of peptide bonds with very broad specificity.. The formation of the proteasomal ATPase PAN-20S proteasome complex, via the docking of the C-termini of PAN into the intersubunit pockets in the alpha-rings, triggers opening of the gate for substrate entry. Interconversion between the open-gate and close-gate conformations leads to a dynamic regulation of the 20S proteasome proteolysis activity. Its function is as follows. Component of the proteasome core, a large protease complex with broad specificity involved in protein degradation. This chain is Proteasome subunit beta, found in Methanococcus vannielii (strain ATCC 35089 / DSM 1224 / JCM 13029 / OCM 148 / SB).